The sequence spans 163 residues: Nucleotide-binding protein CJE0423 (163 aa).

The protein belongs to the YajQ family.

In terms of biological role, nucleotide-binding protein. In Campylobacter jejuni (strain RM1221), this protein is Nucleotide-binding protein CJE0423.